The sequence spans 592 residues: Neurogenic locus notch homolog protein (592 aa).

The first 19 residues, 1-19 (MIFVLTLVALCTAIHCPDG), serve as a signal peptide directing secretion. EGF-like domains lie at 64-104 (YPSI…DYQV), 106-146 (VPEA…EKCT), 267-307 (YPEA…NTCI), 353-387 (NSQTNPPQLCHSAGSCDFDTGVCSCNPTNSGPTCE), 453-488 (VPNSCVTASLIICSNRGTCTDGVCKCNEGYSGALCE), and 546-588 (IDGE…KHCN). Intrachain disulfides connect Cys68–Cys82, Cys76–Cys92, Cys110–Cys123, Cys117–Cys134, Cys136–Cys145, Cys271–Cys284, Cys278–Cys293, Cys295–Cys306, Cys362–Cys375, Cys377–Cys386, Cys457–Cys471, Cys478–Cys487, Cys550–Cys565, Cys555–Cys576, and Cys578–Cys587. A glycan (N-linked (GlcNAc...) asparagine) is linked at Asn552.

This sequence belongs to the NOTCH family. Interacts with EB1.

The protein resides in the cell projection. The protein localises to the cilium. Its subcellular location is the flagellum. It is found in the cytoplasm. It localises to the cytoskeleton. The protein resides in the flagellum axoneme. This chain is Neurogenic locus notch homolog protein, found in Giardia intestinalis (strain ATCC 50803 / WB clone C6) (Giardia lamblia).